A 192-amino-acid polypeptide reads, in one-letter code: Flavin prenyltransferase UbiX (192 aa).

FMN-binding positions include 10-12 (GAS), S36, 92-95 (SVAT), and R127. Residues Y157 and K173 each coordinate dimethylallyl phosphate.

Belongs to the UbiX/PAD1 family.

It catalyses the reaction dimethylallyl phosphate + FMNH2 = prenylated FMNH2 + phosphate. In terms of biological role, flavin prenyltransferase that catalyzes the synthesis of the prenylated FMN cofactor (prenyl-FMN) for 4-hydroxy-3-polyprenylbenzoic acid decarboxylase UbiD. The prenyltransferase is metal-independent and links a dimethylallyl moiety from dimethylallyl monophosphate (DMAP) to the flavin N5 and C6 atoms of FMN. This Chlamydia muridarum (strain MoPn / Nigg) protein is Flavin prenyltransferase UbiX.